The sequence spans 248 residues: tRNA (guanine-N(1)-)-methyltransferase (248 aa).

S-adenosyl-L-methionine is bound by residues G113 and 133–138 (IGDYVL).

Belongs to the RNA methyltransferase TrmD family. In terms of assembly, homodimer.

The protein localises to the cytoplasm. The catalysed reaction is guanosine(37) in tRNA + S-adenosyl-L-methionine = N(1)-methylguanosine(37) in tRNA + S-adenosyl-L-homocysteine + H(+). Specifically methylates guanosine-37 in various tRNAs. This is tRNA (guanine-N(1)-)-methyltransferase from Shewanella baltica (strain OS223).